The sequence spans 728 residues: 1,4-alpha-glucan branching enzyme GlgB (728 aa).

Asp405 acts as the Nucleophile in catalysis. The active-site Proton donor is the Glu458.

It belongs to the glycosyl hydrolase 13 family. GlgB subfamily. As to quaternary structure, monomer.

The catalysed reaction is Transfers a segment of a (1-&gt;4)-alpha-D-glucan chain to a primary hydroxy group in a similar glucan chain.. It participates in glycan biosynthesis; glycogen biosynthesis. Functionally, catalyzes the formation of the alpha-1,6-glucosidic linkages in glycogen by scission of a 1,4-alpha-linked oligosaccharide from growing alpha-1,4-glucan chains and the subsequent attachment of the oligosaccharide to the alpha-1,6 position. In Shigella dysenteriae serotype 1 (strain Sd197), this protein is 1,4-alpha-glucan branching enzyme GlgB.